The chain runs to 419 residues: Innexin inx5 (419 aa).

Topologically, residues 1-21 are cytoplasmic; it reads MFSAVKPLSKYLQFKSIRIYD. A helical membrane pass occupies residues 22–42; sequence SVFTIHSRCTVVILLTCSLLL. The Extracellular portion of the chain corresponds to 43–162; that stretch reads SARQYFGDPI…QTERQYLRYY (120 aa). A helical transmembrane segment spans residues 163 to 183; it reads QWVIILLLFQSFVFYFPSCLW. At 184–238 the chain is on the cytoplasmic side; sequence KVWEGRRLKQLCSEVGDALLSEETYNTRLRMLVKYFTTDYEDMHFCYMAKYVFCE. Residues 239 to 259 traverse the membrane as a helical segment; sequence VLNFLISVVNIIVLEVFLNGF. The Extracellular portion of the chain corresponds to 260–320; sequence WSKYLRALAT…ILPLNILNEK (61 aa). Residues 321–341 form a helical membrane-spanning segment; that stretch reads IFVFLWAWFLLMALMSGLNLL. At 342 to 419 the chain is on the cytoplasmic side; sequence CRLAMICSRY…ASGSTLESPV (78 aa).

The protein belongs to the pannexin family. In terms of tissue distribution, expressed in the cortex of the pupal CNS and at low levels in the wing imaginal disk.

It is found in the cell membrane. The protein localises to the cell junction. Its subcellular location is the gap junction. Its function is as follows. Structural component of the gap junctions. The sequence is that of Innexin inx5 (Inx5) from Drosophila melanogaster (Fruit fly).